Reading from the N-terminus, the 647-residue chain is Acetyl-coenzyme A synthetase (647 aa).

CoA-binding positions include 192–195, threonine 310, and asparagine 334; that span reads RGGR. ATP-binding positions include 386-388, 410-415, aspartate 499, and arginine 514; these read GEP and DTWWQT. Serine 522 lines the CoA pocket. Arginine 525 contacts ATP. Mg(2+) is bound by residues valine 536, histidine 538, and valine 541. Residue arginine 583 coordinates CoA. An N6-acetyllysine modification is found at lysine 608.

Belongs to the ATP-dependent AMP-binding enzyme family. Requires Mg(2+) as cofactor. In terms of processing, acetylated. Deacetylation by the SIR2-homolog deacetylase activates the enzyme.

It catalyses the reaction acetate + ATP + CoA = acetyl-CoA + AMP + diphosphate. Its function is as follows. Catalyzes the conversion of acetate into acetyl-CoA (AcCoA), an essential intermediate at the junction of anabolic and catabolic pathways. AcsA undergoes a two-step reaction. In the first half reaction, AcsA combines acetate with ATP to form acetyl-adenylate (AcAMP) intermediate. In the second half reaction, it can then transfer the acetyl group from AcAMP to the sulfhydryl group of CoA, forming the product AcCoA. In Caulobacter vibrioides (strain ATCC 19089 / CIP 103742 / CB 15) (Caulobacter crescentus), this protein is Acetyl-coenzyme A synthetase.